The primary structure comprises 312 residues: Aspartate carbamoyltransferase catalytic subunit (312 aa).

The carbamoyl phosphate site is built by Arg58 and Thr59. Position 86 (Lys86) interacts with L-aspartate. 3 residues coordinate carbamoyl phosphate: Arg108, His136, and Gln139. The L-aspartate site is built by Arg169 and Arg223. Carbamoyl phosphate contacts are provided by Gly264 and Pro265.

The protein belongs to the aspartate/ornithine carbamoyltransferase superfamily. ATCase family. As to quaternary structure, heterododecamer (2C3:3R2) of six catalytic PyrB chains organized as two trimers (C3), and six regulatory PyrI chains organized as three dimers (R2).

The enzyme catalyses carbamoyl phosphate + L-aspartate = N-carbamoyl-L-aspartate + phosphate + H(+). The protein operates within pyrimidine metabolism; UMP biosynthesis via de novo pathway; (S)-dihydroorotate from bicarbonate: step 2/3. Functionally, catalyzes the condensation of carbamoyl phosphate and aspartate to form carbamoyl aspartate and inorganic phosphate, the committed step in the de novo pyrimidine nucleotide biosynthesis pathway. The sequence is that of Aspartate carbamoyltransferase catalytic subunit from Desulfitobacterium hafniense (strain DSM 10664 / DCB-2).